The sequence spans 322 residues: Ferrochelatase (322 aa).

Positions 193 and 274 each coordinate Fe cation.

The protein belongs to the ferrochelatase family.

It is found in the cytoplasm. The enzyme catalyses heme b + 2 H(+) = protoporphyrin IX + Fe(2+). It functions in the pathway porphyrin-containing compound metabolism; protoheme biosynthesis; protoheme from protoporphyrin-IX: step 1/1. Functionally, catalyzes the ferrous insertion into protoporphyrin IX. This chain is Ferrochelatase, found in Photobacterium profundum (strain SS9).